The chain runs to 79 residues: Small ribosomal subunit protein uS17 (79 aa).

This sequence belongs to the universal ribosomal protein uS17 family. As to quaternary structure, part of the 30S ribosomal subunit.

Its function is as follows. One of the primary rRNA binding proteins, it binds specifically to the 5'-end of 16S ribosomal RNA. This chain is Small ribosomal subunit protein uS17, found in Rhizobium etli (strain ATCC 51251 / DSM 11541 / JCM 21823 / NBRC 15573 / CFN 42).